A 384-amino-acid polypeptide reads, in one-letter code: 1-deoxy-D-xylulose 5-phosphate reductoisomerase (384 aa).

Residues Thr-10, Gly-11, Ser-12, Ile-13, Gly-36, and Asn-123 each coordinate NADPH. Lys-124 is a 1-deoxy-D-xylulose 5-phosphate binding site. NADPH is bound at residue Glu-125. Asp-149 contacts Mn(2+). Residues Ser-150, Glu-151, Ser-175, and His-198 each coordinate 1-deoxy-D-xylulose 5-phosphate. Glu-151 is a Mn(2+) binding site. Gly-204 serves as a coordination point for NADPH. Positions 211, 216, 217, and 220 each coordinate 1-deoxy-D-xylulose 5-phosphate. Glu-220 serves as a coordination point for Mn(2+).

This sequence belongs to the DXR family. Mg(2+) serves as cofactor. Requires Mn(2+) as cofactor.

The enzyme catalyses 2-C-methyl-D-erythritol 4-phosphate + NADP(+) = 1-deoxy-D-xylulose 5-phosphate + NADPH + H(+). It participates in isoprenoid biosynthesis; isopentenyl diphosphate biosynthesis via DXP pathway; isopentenyl diphosphate from 1-deoxy-D-xylulose 5-phosphate: step 1/6. Catalyzes the NADPH-dependent rearrangement and reduction of 1-deoxy-D-xylulose-5-phosphate (DXP) to 2-C-methyl-D-erythritol 4-phosphate (MEP). The sequence is that of 1-deoxy-D-xylulose 5-phosphate reductoisomerase from Chlorobium phaeovibrioides (strain DSM 265 / 1930) (Prosthecochloris vibrioformis (strain DSM 265)).